The primary structure comprises 1035 residues: Teashirt homolog 2 (1035 aa).

A disordered region spans residues M1 to Q92. Positions A13–Q42 form a coiled coil. The span at L21–S37 shows a compositional bias: acidic residues. 2 stretches are compositionally biased toward polar residues: residues S39 to P49 and S66 to Q92. A Glycyl lysine isopeptide (Lys-Gly) (interchain with G-Cter in SUMO2) cross-link involves residue K189. 2 consecutive C2H2-type zinc fingers follow at residues F216–H240 and L276–H300. The segment at H240 to D266 is disordered. Glycyl lysine isopeptide (Lys-Gly) (interchain with G-Cter in SUMO2) cross-links involve residues K307 and K316. A C2H2-type 3; atypical zinc finger spans residues L381–H405. Residue K418 forms a Glycyl lysine isopeptide (Lys-Gly) (interchain with G-Cter in SUMO2) linkage. Residues S432–S450 are compositionally biased toward low complexity. Positions S432 to A496 are disordered. Over residues E460–E483 the composition is skewed to basic and acidic residues. Glycyl lysine isopeptide (Lys-Gly) (interchain with G-Cter in SUMO2) cross-links involve residues K462, K481, K498, and K602. Disordered stretches follow at residues Q600 to V674 and Q764 to H791. The span at V601–Q669 shows a compositional bias: basic and acidic residues. Residues K801 and K821 each participate in a glycyl lysine isopeptide (Lys-Gly) (interchain with G-Cter in SUMO2) cross-link. Residues R842–G912 constitute a DNA-binding region (homeobox). Residues F927–H949 form a C2H2-type 4 zinc finger. Residues V968 to S977 show a composition bias toward low complexity. Disordered regions lie at residues V968 to G987 and S1015 to E1035. A Phosphoserine modification is found at S981. Residues F995–H1018 form a C2H2-type 5 zinc finger.

This sequence belongs to the teashirt C2H2-type zinc-finger protein family. In terms of assembly, interacts (via homeobox domain) with APBB1 (via PID domain 1). Sumoylated.

The protein localises to the nucleus. Functionally, probable transcriptional regulator involved in developmental processes. May act as a transcriptional repressor (Potential). This is Teashirt homolog 2 (TSHZ2) from Sus scrofa (Pig).